A 478-amino-acid chain; its full sequence is ATP synthase subunit beta (478 aa).

Residue 155–162 (GGAGVGKT) participates in ATP binding.

Belongs to the ATPase alpha/beta chains family. In terms of assembly, F-type ATPases have 2 components, CF(1) - the catalytic core - and CF(0) - the membrane proton channel. CF(1) has five subunits: alpha(3), beta(3), gamma(1), delta(1), epsilon(1). CF(0) has three main subunits: a(1), b(2) and c(9-12). The alpha and beta chains form an alternating ring which encloses part of the gamma chain. CF(1) is attached to CF(0) by a central stalk formed by the gamma and epsilon chains, while a peripheral stalk is formed by the delta and b chains.

It localises to the cell inner membrane. It catalyses the reaction ATP + H2O + 4 H(+)(in) = ADP + phosphate + 5 H(+)(out). Functionally, produces ATP from ADP in the presence of a proton gradient across the membrane. The catalytic sites are hosted primarily by the beta subunits. This is ATP synthase subunit beta from Fuscovulum blasticum (Rhodobacter blasticus).